The chain runs to 122 residues: Acidic phospholipase A2 (122 aa).

7 cysteine pairs are disulfide-bonded: C26/C115, C28/C44, C43/C95, C49/C122, C50/C88, C57/C81, and C75/C86. Positions 27, 29, and 31 each coordinate Ca(2+). H47 is an active-site residue. D48 serves as a coordination point for Ca(2+). D89 is an active-site residue.

The protein belongs to the phospholipase A2 family. Group II subfamily. D49 sub-subfamily. As to quaternary structure, monomer. Ca(2+) is required as a cofactor. As to expression, expressed by the venom gland.

It is found in the secreted. It catalyses the reaction a 1,2-diacyl-sn-glycero-3-phosphocholine + H2O = a 1-acyl-sn-glycero-3-phosphocholine + a fatty acid + H(+). PLA2 catalyzes the calcium-dependent hydrolysis of the 2-acyl groups in 3-sn-phosphoglycerides. In Gloydius blomhoffii (Mamushi), this protein is Acidic phospholipase A2.